A 347-amino-acid polypeptide reads, in one-letter code: MKPPILIIIMSTVMSGTMIVLTSSHWLLTWIGFEMNMLAIIPILMKNHTPRATEASTKYFLTQATASMLLMMGIIINLMFSGEWTISKIPNPIASGLVTIALTMKLGMAPFHFWVPEVTQGISLSSGMILLTWQKIAPLSVLYQISPSINPKLLITMAIASVLIGGWGGLNQTQLRKILAYSSIAHMGWMTVILTYNPTLMVLNLTIYITMTLSTFMLFMHNSSTTTLSLSNTWNKLPLMTSLILMLMMSLGGLPPLSGFAPKWMIIQELTKNDMIILPTFMAITALLNLYFYMRLSYSTALTMFPSVNNMKMKWQFESAKKIILLPPLIIISTMLLPMTPMMSILE.

11 helical membrane passes run 3 to 23, 25 to 45, 60 to 80, 96 to 116, 122 to 142, 153 to 173, 178 to 198, 200 to 220, 237 to 257, 274 to 294, and 323 to 343; these read PPIL…VLTS, HWLL…PILM, FLTQ…NLMF, GLVT…FWVP, ISLS…LSVL, LLIT…LNQT, ILAY…TYNP, LMVL…MLFM, LPLM…LPPL, DMII…YFYM, and IILL…TPMM.

It belongs to the complex I subunit 2 family. As to quaternary structure, core subunit of respiratory chain NADH dehydrogenase (Complex I) which is composed of 45 different subunits. Interacts with TMEM242.

The protein localises to the mitochondrion inner membrane. The catalysed reaction is a ubiquinone + NADH + 5 H(+)(in) = a ubiquinol + NAD(+) + 4 H(+)(out). Core subunit of the mitochondrial membrane respiratory chain NADH dehydrogenase (Complex I) which catalyzes electron transfer from NADH through the respiratory chain, using ubiquinone as an electron acceptor. Essential for the catalytic activity and assembly of complex I. The sequence is that of NADH-ubiquinone oxidoreductase chain 2 from Phoca vitulina (Harbor seal).